Here is a 257-residue protein sequence, read N- to C-terminus: Nickel import system ATP-binding protein NikD (257 aa).

Positions 4-245 (IDIQNLTIKN…HLHPYTERLI (242 aa)) constitute an ABC transporter domain. 37 to 44 (GESGAGKS) contacts ATP.

The protein belongs to the ABC transporter superfamily. As to quaternary structure, the complex is composed of two ATP-binding proteins (NikD and NikE), two transmembrane proteins (NikB and NikC) and a solute-binding protein (NikA).

It localises to the cell membrane. The enzyme catalyses Ni(2+)(out) + ATP + H2O = Ni(2+)(in) + ADP + phosphate + H(+). In terms of biological role, part of the ABC transporter complex NikABCDE (Opp2) involved in nickel import. Probably responsible for energy coupling to the transport system. The protein is Nickel import system ATP-binding protein NikD of Staphylococcus aureus (strain MW2).